The primary structure comprises 750 residues: Methylmalonyl-CoA mutase, mitochondrial (750 aa).

Residues methionine 1–leucine 32 constitute a mitochondrion transit peptide. A malonyl-CoA-binding site is contributed by glutamine 50. At lysine 89 the chain carries N6-acetyllysine. Residues tyrosine 96–methionine 99 and threonine 106–tyrosine 110 contribute to the malonyl-CoA site. N6-acetyllysine is present on lysine 212. Residues threonine 216–glutamine 218, arginine 228, lysine 255, histidine 265, and arginine 304–serine 306 each bind malonyl-CoA. Residue lysine 335 is modified to N6-acetyllysine. At lysine 343 the chain carries N6-succinyllysine. Serine 481 is subject to Phosphoserine. An N6-succinyllysine modification is found at lysine 595. The residue at position 602 (lysine 602) is an N6-acetyllysine. In terms of domain architecture, B12-binding spans arginine 614 to lysine 746. Residue histidine 627 coordinates adenosylcob(III)alamin.

Belongs to the methylmalonyl-CoA mutase family. Homodimer. Interacts (the apoenzyme form) with MMAA; the interaction is GTP dependent. It depends on adenosylcob(III)alamin as a cofactor.

It localises to the mitochondrion matrix. The protein resides in the mitochondrion. Its subcellular location is the cytoplasm. The catalysed reaction is (R)-methylmalonyl-CoA = succinyl-CoA. With respect to regulation, inhibited by itaconyl-CoA, a metabolite that inactivates the coenzyme B12 cofactor. Catalyzes the reversible isomerization of methylmalonyl-CoA (MMCoA) (generated from branched-chain amino acid metabolism and degradation of dietary odd chain fatty acids and cholesterol) to succinyl-CoA (3-carboxypropionyl-CoA), a key intermediate of the tricarboxylic acid cycle. The protein is Methylmalonyl-CoA mutase, mitochondrial (MMUT) of Pongo abelii (Sumatran orangutan).